Consider the following 425-residue polypeptide: 5'-deoxyadenosine deaminase (425 aa).

Positions 62 and 64 each coordinate Zn(2+). 2 residues coordinate substrate: Glu-91 and His-183. His-210 provides a ligand contact to Zn(2+). Glu-213 and Asp-298 together coordinate substrate. Asp-298 lines the Zn(2+) pocket.

This sequence belongs to the metallo-dependent hydrolases superfamily. MTA/SAH deaminase family. Homotetramer. It depends on Zn(2+) as a cofactor.

The catalysed reaction is 5'-deoxyadenosine + H2O + H(+) = 5'-deoxyinosine + NH4(+). The enzyme catalyses S-adenosyl-L-homocysteine + H2O + H(+) = S-inosyl-L-homocysteine + NH4(+). It catalyses the reaction S-methyl-5'-thioadenosine + H2O + H(+) = S-methyl-5'-thioinosine + NH4(+). It carries out the reaction adenosine + H2O + H(+) = inosine + NH4(+). Its pathway is amino-acid biosynthesis; S-adenosyl-L-methionine biosynthesis. Its function is as follows. Catalyzes the deamination of three SAM-derived enzymatic products, namely 5'-deoxyadenosine, S-adenosyl-L-homocysteine, and 5'-methylthioadenosine, to produce the inosine analogs. Can also deaminate adenosine. The preferred substrate for this enzyme is 5'-deoxyadenosine, but all these substrates are efficiently deaminated. Likely functions in a S-adenosyl-L-methionine (SAM) recycling pathway from S-adenosyl-L-homocysteine (SAH) produced from SAM-dependent methylation reactions. May also be involved in the recycling of 5'-deoxyadenosine, whereupon the 5'-deoxyribose moiety of 5'-deoxyinosine is further metabolized to deoxyhexoses used for the biosynthesis of aromatic amino acids in methanogens. The sequence is that of 5'-deoxyadenosine deaminase from Methanosphaera stadtmanae (strain ATCC 43021 / DSM 3091 / JCM 11832 / MCB-3).